The primary structure comprises 365 residues: 5-hydroxytryptamine receptor 1F (365 aa).

Residues 1 to 24 (MDFLNSSDQNLTSEELLNRMPSKI) are Extracellular-facing. N-linked (GlcNAc...) asparagine glycosylation is found at N5 and N10. Residues 25-49 (LVSLTLSGLALMTTTINSLVIAAII) traverse the membrane as a helical segment. Residues 50–59 (VTRKLHHPAN) lie on the Cytoplasmic side of the membrane. The helical transmembrane segment at 60–81 (YLICSLAVTDFLVAVLVMPFSI) threads the bilayer. Topologically, residues 82 to 96 (VYIVRESWIMGQVVC) are extracellular. The cysteines at positions 96 and 172 are disulfide-linked. A helical membrane pass occupies residues 97-119 (DIWLSVDITCCTCSILHLSAIAL). Serotonin contacts are provided by D103 and C107. The DRY motif; important for ligand-induced conformation changes motif lies at 120–122 (DRY). Topologically, residues 120–139 (DRYRAITDAVEYARKRTPKH) are cytoplasmic. Residues 140–159 (AGIMITIVWIISVFISMPPL) form a helical membrane-spanning segment. Residues 160 to 178 (FWRHQGTSRDDECIIKHDH) are Extracellular-facing. A helical membrane pass occupies residues 179-202 (IVSTIYSTFGAFYIPLALILILYY). The Cytoplasmic portion of the chain corresponds to 203–291 (KIYRAAKTLY…KISGTRERKA (89 aa)). Residues 292 to 315 (ATTLGLILGAFVICWLPFFVKELV) form a helical membrane-spanning segment. Over 316–327 (VNVCDKCKISEE) the chain is Extracellular. A helical membrane pass occupies residues 328–350 (MSNFLAWLGYLNSLINPLIYTIF). Positions 343-347 (NPLIY) match the NPxxY motif; important for ligand-induced conformation changes and signaling motif. Over 351-365 (NEDFKKAFQKLVRCR) the chain is Cytoplasmic.

It belongs to the G-protein coupled receptor 1 family.

The protein resides in the cell membrane. Functionally, G-protein coupled receptor for 5-hydroxytryptamine (serotonin). Also functions as a receptor for various alkaloids and psychoactive substances. Ligand binding causes a conformation change that triggers signaling via guanine nucleotide-binding proteins (G proteins) and modulates the activity of downstream effectors, such as adenylate cyclase. HTR1F is coupled to G(i)/G(o) G alpha proteins and mediates inhibitory neurotransmission by inhibiting adenylate cyclase activity. This chain is 5-hydroxytryptamine receptor 1F (HTR1F), found in Pan troglodytes (Chimpanzee).